A 124-amino-acid polypeptide reads, in one-letter code: MAIAKEDILAAVEGMTVLELNELVKAFEEKFGVSAAAVAVAGPAAGGAAAAAEEKTEFTVVLAEAGSNKVAVIKAVREITGLGLKEAKDLVDGAPKPVKEGVDKASADEAKKKLEDAGAKVELK.

Belongs to the bacterial ribosomal protein bL12 family. In terms of assembly, homodimer. Part of the ribosomal stalk of the 50S ribosomal subunit. Forms a multimeric L10(L12)X complex, where L10 forms an elongated spine to which 2 to 4 L12 dimers bind in a sequential fashion. Binds GTP-bound translation factors.

Forms part of the ribosomal stalk which helps the ribosome interact with GTP-bound translation factors. Is thus essential for accurate translation. This Burkholderia mallei (strain NCTC 10247) protein is Large ribosomal subunit protein bL12.